The following is a 662-amino-acid chain: DNA topoisomerase 4 subunit B (662 aa).

ATP contacts are provided by residues Tyr20, Asn60, Asp87, 129–135 (GLHGVGI), and Lys359. Residues 439–553 (TELFIVEGDS…EGHLYLAKPP (115 aa)) enclose the Toprim domain. Residues Glu445, Asp518, and Asp520 each contribute to the Mg(2+) site.

Belongs to the type II topoisomerase family. ParE type 1 subfamily. As to quaternary structure, heterotetramer composed of ParC and ParE. Requires Mg(2+) as cofactor. Mn(2+) is required as a cofactor. It depends on Ca(2+) as a cofactor.

The enzyme catalyses ATP-dependent breakage, passage and rejoining of double-stranded DNA.. In terms of biological role, topoisomerase IV is essential for chromosome segregation. It relaxes supercoiled DNA. Performs the decatenation events required during the replication of a circular DNA molecule. The protein is DNA topoisomerase 4 subunit B of Rickettsia felis (strain ATCC VR-1525 / URRWXCal2) (Rickettsia azadi).